A 199-amino-acid chain; its full sequence is Ribonuclease HI (199 aa).

The interval 1–68 (MPVVECDIQT…TAVVQPDRGG (68 aa)) is not required for RNase H activity. An RNase H type-1 domain is found at 66-197 (RGGRVHAYFD…ADALANEALD (132 aa)). The interval 69-199 (RVHAYFDGAS…ALANEALDDA (131 aa)) is as active as intact RNase H. Mg(2+) contacts are provided by D75, E115, D139, and D189. Residues D75, E115, D139, and D189 each coordinate Mn(2+).

It belongs to the RNase H family. It depends on Mn(2+) as a cofactor. Mg(2+) is required as a cofactor. Co(2+) serves as cofactor. Requires Ni(2+) as cofactor.

Its subcellular location is the cytoplasm. It carries out the reaction Endonucleolytic cleavage to 5'-phosphomonoester.. In terms of biological role, nuclease that specifically degrades the RNA of RNA-DNA hybrids; seems to act exonucleolytically on RNA/DNA hybrids. Endonucleolytically removes RNA primers from the Okazaki fragments of lagging strand synthesis on its own. Complements the temperature-sensitive phenotype of an E.coli double rnhA/rnhB (RNase H) disruption mutant. The sequence is that of Ribonuclease HI (rnhA) from Halobacterium salinarum (strain ATCC 700922 / JCM 11081 / NRC-1) (Halobacterium halobium).